Consider the following 241-residue polypeptide: Eukaryotic translation initiation factor 3 subunit J (241 aa).

A compositionally biased stretch (basic and acidic residues) spans 1 to 27 (MEEDWEQHGEKEEVPLPAKKPDANKWD). Residues 1–99 (MEEDWEQHGE…ENMTPEQKLA (99 aa)) are disordered. A compositionally biased stretch (acidic residues) spans 28-45 (GEDEEEEVKDSWEDEDEL). Positions 31 to 119 (EEEEVKDSWE…ESDLKNALDT (89 aa)) form a coiled coil. Composition is skewed to basic and acidic residues over residues 46–58 (EEKKDEEKVETPK) and 69–90 (IVEKEKQKHEEAERRRLEKEAE).

The protein belongs to the eIF-3 subunit J family. As to quaternary structure, component of the eukaryotic translation initiation factor 3 (eIF-3) complex.

The protein localises to the cytoplasm. In terms of biological role, component of the eukaryotic translation initiation factor 3 (eIF-3) complex, which is involved in protein synthesis of a specialized repertoire of mRNAs and, together with other initiation factors, stimulates binding of mRNA and methionyl-tRNAi to the 40S ribosome. The eIF-3 complex specifically targets and initiates translation of a subset of mRNAs involved in cell proliferation. The sequence is that of Eukaryotic translation initiation factor 3 subunit J from Culex quinquefasciatus (Southern house mosquito).